A 205-amino-acid polypeptide reads, in one-letter code: Thiamine-phosphate synthase (205 aa).

4-amino-2-methyl-5-(diphosphooxymethyl)pyrimidine-binding positions include 36–40 and Asp68; that span reads QYRRK. Asp69 and Asp88 together coordinate Mg(2+). Position 106 (Ser106) interacts with 4-amino-2-methyl-5-(diphosphooxymethyl)pyrimidine. 132–134 lines the 2-[(2R,5Z)-2-carboxy-4-methylthiazol-5(2H)-ylidene]ethyl phosphate pocket; it reads SPT. Lys135 contributes to the 4-amino-2-methyl-5-(diphosphooxymethyl)pyrimidine binding site. 2-[(2R,5Z)-2-carboxy-4-methylthiazol-5(2H)-ylidene]ethyl phosphate is bound by residues Gly162 and 182–183; that span reads IS.

The protein belongs to the thiamine-phosphate synthase family. Mg(2+) serves as cofactor.

The enzyme catalyses 2-[(2R,5Z)-2-carboxy-4-methylthiazol-5(2H)-ylidene]ethyl phosphate + 4-amino-2-methyl-5-(diphosphooxymethyl)pyrimidine + 2 H(+) = thiamine phosphate + CO2 + diphosphate. The catalysed reaction is 2-(2-carboxy-4-methylthiazol-5-yl)ethyl phosphate + 4-amino-2-methyl-5-(diphosphooxymethyl)pyrimidine + 2 H(+) = thiamine phosphate + CO2 + diphosphate. It carries out the reaction 4-methyl-5-(2-phosphooxyethyl)-thiazole + 4-amino-2-methyl-5-(diphosphooxymethyl)pyrimidine + H(+) = thiamine phosphate + diphosphate. It participates in cofactor biosynthesis; thiamine diphosphate biosynthesis; thiamine phosphate from 4-amino-2-methyl-5-diphosphomethylpyrimidine and 4-methyl-5-(2-phosphoethyl)-thiazole: step 1/1. Functionally, condenses 4-methyl-5-(beta-hydroxyethyl)thiazole monophosphate (THZ-P) and 2-methyl-4-amino-5-hydroxymethyl pyrimidine pyrophosphate (HMP-PP) to form thiamine monophosphate (TMP). The chain is Thiamine-phosphate synthase from Caldivirga maquilingensis (strain ATCC 700844 / DSM 13496 / JCM 10307 / IC-167).